The chain runs to 579 residues: Glutamine--tRNA ligase (579 aa).

The short motif at 41–51 (PEPNGYLHIGH) is the 'HIGH' region element. Residues 42-44 (EPN) and 48-54 (HIGHAKA) each bind ATP. L-glutamine-binding residues include Asp-74 and Tyr-218. Residues Thr-237, 285–286 (RL), and 293–295 (MSK) contribute to the ATP site. The 'KMSKS' region motif lies at 292-296 (VMSKR).

Belongs to the class-I aminoacyl-tRNA synthetase family. As to quaternary structure, monomer.

The protein localises to the cytoplasm. It catalyses the reaction tRNA(Gln) + L-glutamine + ATP = L-glutaminyl-tRNA(Gln) + AMP + diphosphate. This is Glutamine--tRNA ligase from Xanthomonas euvesicatoria pv. vesicatoria (strain 85-10) (Xanthomonas campestris pv. vesicatoria).